The sequence spans 350 residues: tRNA uridine(34) hydroxylase (350 aa).

Residues 146-240 form the Rhodanese domain; that stretch reads DDPDALFIDM…YARKAREQGL (95 aa). Cys-200 acts as the Cysteine persulfide intermediate in catalysis.

This sequence belongs to the TrhO family.

It catalyses the reaction uridine(34) in tRNA + AH2 + O2 = 5-hydroxyuridine(34) in tRNA + A + H2O. In terms of biological role, catalyzes oxygen-dependent 5-hydroxyuridine (ho5U) modification at position 34 in tRNAs, the first step in 5-carboxymethoxyuridine (cmo5U) biosynthesis. May be part of an alternate pathway, which is able to bypass cmo5U biogenesis in a subset of tRNAs under aerobic conditions. The protein is tRNA uridine(34) hydroxylase of Escherichia coli (strain SE11).